Here is a 230-residue protein sequence, read N- to C-terminus: Iron-dependent repressor IdeR (230 aa).

One can recognise an HTH dtxR-type domain in the interval 4–65; that stretch reads LVDTTEMYLR…VAGDRHLELT (62 aa).

It belongs to the DtxR/MntR family. As to quaternary structure, homodimer.

The protein resides in the cytoplasm. Its function is as follows. Metal-dependent DNA-binding protein that controls transcription of many genes involved in iron metabolism. The protein is Iron-dependent repressor IdeR (ideR) of Mycobacterium bovis (strain ATCC BAA-935 / AF2122/97).